We begin with the raw amino-acid sequence, 480 residues long: Glutamyl-tRNA(Gln) amidotransferase subunit A (480 aa).

Catalysis depends on charge relay system residues Lys-76 and Ser-151. Ser-175 (acyl-ester intermediate) is an active-site residue.

This sequence belongs to the amidase family. GatA subfamily. Heterotrimer of A, B and C subunits.

The catalysed reaction is L-glutamyl-tRNA(Gln) + L-glutamine + ATP + H2O = L-glutaminyl-tRNA(Gln) + L-glutamate + ADP + phosphate + H(+). Allows the formation of correctly charged Gln-tRNA(Gln) through the transamidation of misacylated Glu-tRNA(Gln) in organisms which lack glutaminyl-tRNA synthetase. The reaction takes place in the presence of glutamine and ATP through an activated gamma-phospho-Glu-tRNA(Gln). The polypeptide is Glutamyl-tRNA(Gln) amidotransferase subunit A (Exiguobacterium sp. (strain ATCC BAA-1283 / AT1b)).